The chain runs to 66 residues: MPKQKTHRGAAKRFKKTGSGKLKRDHAYTSHLFANKSTKAKRKLRKAGLVSAGDYKRIRQMLDNLK.

Basic residues predominate over residues Met1–Arg24. The segment at Met1–His26 is disordered.

Belongs to the bacterial ribosomal protein bL35 family.

This is Large ribosomal subunit protein bL35 from Bacillus cytotoxicus (strain DSM 22905 / CIP 110041 / 391-98 / NVH 391-98).